The primary structure comprises 93 residues: Large ribosomal subunit protein bL27 (93 aa).

Belongs to the bacterial ribosomal protein bL27 family.

The polypeptide is Large ribosomal subunit protein bL27 (Trichormus variabilis (strain ATCC 29413 / PCC 7937) (Anabaena variabilis)).